Here is a 445-residue protein sequence, read N- to C-terminus: ATP synthase subunit b-delta (445 aa).

The segment at 1–168 is ATP synthase subunit b; the sequence is MSIFIGQLIG…PSSVVIDTAA (168 aa). The helical transmembrane segment at 3–23 threads the bilayer; it reads IFIGQLIGFAVIAFIIVKWVV. Positions 169–445 are ATP synthase subunit delta; the sequence is TSRLRAASRQ…LAAAQTGLPD (277 aa).

This sequence in the N-terminal section; belongs to the ATPase B chain family. It in the C-terminal section; belongs to the ATPase delta chain family. As to quaternary structure, F-type ATPases have 2 components, F(1) - the catalytic core - and F(0) - the membrane proton channel. F(1) has five subunits: alpha(3), beta(3), gamma(1), delta(1), epsilon(1). F(0) has three main subunits: a(1), b(2) and c(10-14). The alpha and beta chains form an alternating ring which encloses part of the gamma chain. F(1) is attached to F(0) by a central stalk formed by the gamma and epsilon chains, while a peripheral stalk is formed by the delta and b chains.

It localises to the cell membrane. In terms of biological role, f(1)F(0) ATP synthase produces ATP from ADP in the presence of a proton or sodium gradient. F-type ATPases consist of two structural domains, F(1) containing the extramembraneous catalytic core and F(0) containing the membrane proton channel, linked together by a central stalk and a peripheral stalk. During catalysis, ATP synthesis in the catalytic domain of F(1) is coupled via a rotary mechanism of the central stalk subunits to proton translocation. Functionally, this fusion protein includes a component of the F(0) channel (subunit b) and of the F(1) subunit (subunit delta). Two copies of subunit b and one of delta together form the peripheral 'stator' stalk which links F(1) to F(0). The protein is ATP synthase subunit b-delta (atpFH) of Mycolicibacterium smegmatis (strain ATCC 700084 / mc(2)155) (Mycobacterium smegmatis).